The sequence spans 254 residues: Arginine/ornithine transport ATP-binding protein AotP (254 aa).

In terms of domain architecture, ABC transporter spans 4-249 (LEVQDLHKRY…PQSDRLKQFL (246 aa)). 36 to 43 (GSSGSGKS) contributes to the ATP binding site.

It belongs to the ABC transporter superfamily.

The protein localises to the cell inner membrane. Its function is as follows. Part of the arginine-inducible binding-protein-dependent transport system for arginine and ornithine. Probably responsible for energy coupling to the transport system. This Pseudomonas aeruginosa (strain ATCC 15692 / DSM 22644 / CIP 104116 / JCM 14847 / LMG 12228 / 1C / PRS 101 / PAO1) protein is Arginine/ornithine transport ATP-binding protein AotP (aotP).